The sequence spans 752 residues: Photosystem I P700 chlorophyll a apoprotein A1 (752 aa).

8 helical membrane passes run 73–96 (IFSA…FHGA), 159–182 (LYWI…FHYH), 198–222 (MNHH…HIAL), 294–312 (IAHH…GHMY), 349–372 (WHAQ…HHMY), 388–414 (LSLF…IFMV), 436–458 (AIIS…LYIH), and 533–551 (FMVH…LILL). [4Fe-4S] cluster is bound by residues cysteine 575 and cysteine 584. 2 consecutive transmembrane segments (helical) span residues 591 to 612 (HVFL…HFSW) and 666 to 688 (SSAY…MFLF). Chlorophyll a' is bound at residue histidine 677. Residues methionine 685 and tyrosine 693 each coordinate chlorophyll a. Position 694 (tryptophan 694) interacts with phylloquinone. The helical transmembrane segment at 726–746 (AVGLAHYLLGGIGTTWSFFLA) threads the bilayer.

This sequence belongs to the PsaA/PsaB family. As to quaternary structure, the PsaA/B heterodimer binds the P700 chlorophyll special pair and subsequent electron acceptors. PSI consists of a core antenna complex that captures photons, and an electron transfer chain that converts photonic excitation into a charge separation. The eukaryotic PSI reaction center is composed of at least 11 subunits. P700 is a chlorophyll a/chlorophyll a' dimer, A0 is one or more chlorophyll a, A1 is one or both phylloquinones and FX is a shared 4Fe-4S iron-sulfur center. serves as cofactor.

The protein localises to the plastid. It is found in the chloroplast thylakoid membrane. It carries out the reaction reduced [plastocyanin] + hnu + oxidized [2Fe-2S]-[ferredoxin] = oxidized [plastocyanin] + reduced [2Fe-2S]-[ferredoxin]. In terms of biological role, psaA and PsaB bind P700, the primary electron donor of photosystem I (PSI), as well as the electron acceptors A0, A1 and FX. PSI is a plastocyanin/cytochrome c6-ferredoxin oxidoreductase, converting photonic excitation into a charge separation, which transfers an electron from the donor P700 chlorophyll pair to the spectroscopically characterized acceptors A0, A1, FX, FA and FB in turn. Oxidized P700 is reduced on the lumenal side of the thylakoid membrane by plastocyanin or cytochrome c6. This chain is Photosystem I P700 chlorophyll a apoprotein A1, found in Trieres chinensis (Marine centric diatom).